The sequence spans 333 residues: Transcription initiation factor IIB (333 aa).

The TFIIB-type zinc finger occupies 33–64; that stretch reads EVYKCPICGNDKFVYNYERGEAVCIVCGAVVQ. 4 residues coordinate Zn(2+): C37, C40, C56, and C59. 2 repeat units span residues 149–232 and 243–324.

It belongs to the TFIIB family.

In terms of biological role, stabilizes TBP binding to an archaeal box-A promoter. Also responsible for recruiting RNA polymerase II to the pre-initiation complex (DNA-TBP-TFIIB). In Pyrobaculum aerophilum (strain ATCC 51768 / DSM 7523 / JCM 9630 / CIP 104966 / NBRC 100827 / IM2), this protein is Transcription initiation factor IIB.